The sequence spans 282 residues: Putative phosphoenolpyruvate synthase regulatory protein (282 aa).

An ADP-binding site is contributed by 161–168 (GVSRSGKT).

This sequence belongs to the pyruvate, phosphate/water dikinase regulatory protein family. PSRP subfamily.

The enzyme catalyses [pyruvate, water dikinase] + ADP = [pyruvate, water dikinase]-phosphate + AMP + H(+). The catalysed reaction is [pyruvate, water dikinase]-phosphate + phosphate + H(+) = [pyruvate, water dikinase] + diphosphate. Its function is as follows. Bifunctional serine/threonine kinase and phosphorylase involved in the regulation of the phosphoenolpyruvate synthase (PEPS) by catalyzing its phosphorylation/dephosphorylation. The protein is Putative phosphoenolpyruvate synthase regulatory protein of Janthinobacterium sp. (strain Marseille) (Minibacterium massiliensis).